The primary structure comprises 134 residues: GSH-induced LITAF domain protein (134 aa).

The 81-residue stretch at 33–113 (DPLGAPIQQT…CGNKVADFEK (81 aa)) folds into the LITAF domain. Positions 53 and 56 each coordinate Zn(2+). The interval 68–88 (PGVAAVVACMMPFMLGFCFLC) is membrane-binding amphipathic helix. 2 residues coordinate Zn(2+): C101 and C104.

The protein belongs to the CDIP1/LITAF family. In terms of assembly, interacts (via N- and C-terminal) with MIEL1 and LSD1 (via N-terminus).

The protein resides in the cell membrane. Its function is as follows. Acts as a membrane anchor, bringing other regulators of programmed cell death (PCD) to the plasma membrane. Negatively regulates hypersensitive cell death. The protein is GSH-induced LITAF domain protein of Arabidopsis thaliana (Mouse-ear cress).